The following is a 205-amino-acid chain: Golgi to ER traffic protein 1 (205 aa).

The Lumenal segment spans residues 1–3 (MDY). Residues 4 to 24 (WILLVLAFLVADKSWHLTGLL) form a helical membrane-spanning segment. Over 25–96 (ATKLTSPERL…ATKARLAKLK (72 aa)) the chain is Cytoplasmic. Positions 32–96 (ERLQQLIRER…ATKARLAKLK (65 aa)) form a coiled coil. The helical transmembrane segment at 97–117 (LLVVTVPFTALKFYKGKLPVY) threads the bilayer. At 118–156 (ALPKGMFPRFIEGTLEHGWLYMALAPLNMKQFSEGASVA) the chain is on the lumenal side. A helical membrane pass occupies residues 157–173 (VSLGIWLFALLRVLGAI). Over 174-205 (EFVLETLREQNPQVATETAKVHARTAQAASAN) the chain is Cytoplasmic.

This sequence belongs to the WRB/GET1 family. Component of the Golgi to ER traffic (GET) complex, which is composed of GET1, GET2 and GET3. Within the complex, GET1 and GET2 form a heterotetramer which is stabilized by phosphatidylinositol binding and which binds to the GET3 homodimer.

The protein resides in the endoplasmic reticulum membrane. It localises to the golgi apparatus membrane. Required for the post-translational delivery of tail-anchored (TA) proteins to the endoplasmic reticulum. Together with GET2, acts as a membrane receptor for soluble GET3, which recognizes and selectively binds the transmembrane domain of TA proteins in the cytosol. The GET complex cooperates with the HDEL receptor ERD2 to mediate the ATP-dependent retrieval of resident ER proteins that contain a C-terminal H-D-E-L retention signal from the Golgi to the ER. The polypeptide is Golgi to ER traffic protein 1 (Eremothecium gossypii (strain ATCC 10895 / CBS 109.51 / FGSC 9923 / NRRL Y-1056) (Yeast)).